Here is a 374-residue protein sequence, read N- to C-terminus: Chaperone protein DnaJ (374 aa).

Residues 5-70 enclose the J domain; sequence CYYEILNVSK…SKRSRYDQFG (66 aa). Residues 130 to 207 form a CR-type zinc finger; it reads GVEKEITIPR…CYGNGKVKKQ (78 aa). Zn(2+) is bound by residues Cys-143, Cys-146, Cys-159, Cys-162, Cys-181, Cys-184, Cys-195, and Cys-198. CXXCXGXG motif repeat units follow at residues 143-150, 159-166, 181-188, and 195-202; these read CDSCDGTG, CHACHGQG, CPVCNGTG, and CDACYGNG.

This sequence belongs to the DnaJ family. In terms of assembly, homodimer. The cofactor is Zn(2+).

The protein resides in the cytoplasm. Participates actively in the response to hyperosmotic and heat shock by preventing the aggregation of stress-denatured proteins and by disaggregating proteins, also in an autonomous, DnaK-independent fashion. Unfolded proteins bind initially to DnaJ; upon interaction with the DnaJ-bound protein, DnaK hydrolyzes its bound ATP, resulting in the formation of a stable complex. GrpE releases ADP from DnaK; ATP binding to DnaK triggers the release of the substrate protein, thus completing the reaction cycle. Several rounds of ATP-dependent interactions between DnaJ, DnaK and GrpE are required for fully efficient folding. Also involved, together with DnaK and GrpE, in the DNA replication of plasmids through activation of initiation proteins. The chain is Chaperone protein DnaJ from Francisella tularensis subsp. tularensis (strain FSC 198).